Here is a 210-residue protein sequence, read N- to C-terminus: ATP-dependent Clp protease proteolytic subunit (210 aa).

Ser-106 serves as the catalytic Nucleophile. Residue His-131 is part of the active site.

Belongs to the peptidase S14 family. As to quaternary structure, fourteen ClpP subunits assemble into 2 heptameric rings which stack back to back to give a disk-like structure with a central cavity, resembling the structure of eukaryotic proteasomes.

The protein localises to the cytoplasm. It carries out the reaction Hydrolysis of proteins to small peptides in the presence of ATP and magnesium. alpha-casein is the usual test substrate. In the absence of ATP, only oligopeptides shorter than five residues are hydrolyzed (such as succinyl-Leu-Tyr-|-NHMec, and Leu-Tyr-Leu-|-Tyr-Trp, in which cleavage of the -Tyr-|-Leu- and -Tyr-|-Trp bonds also occurs).. In terms of biological role, cleaves peptides in various proteins in a process that requires ATP hydrolysis. Has a chymotrypsin-like activity. Plays a major role in the degradation of misfolded proteins. The protein is ATP-dependent Clp protease proteolytic subunit of Rhodopseudomonas palustris (strain BisB18).